Reading from the N-terminus, the 248-residue chain is Carbohydrate deacetylase 2 (248 aa).

Positions 59 and 123 each coordinate Mg(2+).

It belongs to the YdjC deacetylase family. Homodimer. Mg(2+) serves as cofactor.

Probably catalyzes the deacetylation of acetylated carbohydrates an important step in the degradation of oligosaccharides. In Listeria innocua serovar 6a (strain ATCC BAA-680 / CLIP 11262), this protein is Carbohydrate deacetylase 2.